A 240-amino-acid chain; its full sequence is Biosynthetic peptidoglycan transglycosylase (240 aa).

A helical membrane pass occupies residues 16-36; that stretch reads VLMALLCLFLIYELAMFSMVV.

This sequence belongs to the glycosyltransferase 51 family.

It localises to the cell inner membrane. The catalysed reaction is [GlcNAc-(1-&gt;4)-Mur2Ac(oyl-L-Ala-gamma-D-Glu-L-Lys-D-Ala-D-Ala)](n)-di-trans,octa-cis-undecaprenyl diphosphate + beta-D-GlcNAc-(1-&gt;4)-Mur2Ac(oyl-L-Ala-gamma-D-Glu-L-Lys-D-Ala-D-Ala)-di-trans,octa-cis-undecaprenyl diphosphate = [GlcNAc-(1-&gt;4)-Mur2Ac(oyl-L-Ala-gamma-D-Glu-L-Lys-D-Ala-D-Ala)](n+1)-di-trans,octa-cis-undecaprenyl diphosphate + di-trans,octa-cis-undecaprenyl diphosphate + H(+). It participates in cell wall biogenesis; peptidoglycan biosynthesis. Peptidoglycan polymerase that catalyzes glycan chain elongation from lipid-linked precursors. This Bordetella avium (strain 197N) protein is Biosynthetic peptidoglycan transglycosylase.